Reading from the N-terminus, the 422-residue chain is Phospho-N-acetylmuramoyl-pentapeptide-transferase (422 aa).

9 helical membrane passes run 28-48 (LMAI…FINL), 71-91 (VGVP…PCLL), 95-115 (LHNI…SLGF), 136-156 (IIGQ…SPDV), 211-231 (AGWI…SNGA), 246-266 (AIIG…EFAG), 279-299 (LVIF…YNAY), 313-333 (IGGI…IPIL), and 399-419 (KITV…IITL).

It belongs to the glycosyltransferase 4 family. MraY subfamily. Requires Mg(2+) as cofactor.

It is found in the cell inner membrane. It catalyses the reaction UDP-N-acetyl-alpha-D-muramoyl-L-alanyl-gamma-D-glutamyl-meso-2,6-diaminopimeloyl-D-alanyl-D-alanine + di-trans,octa-cis-undecaprenyl phosphate = di-trans,octa-cis-undecaprenyl diphospho-N-acetyl-alpha-D-muramoyl-L-alanyl-D-glutamyl-meso-2,6-diaminopimeloyl-D-alanyl-D-alanine + UMP. It participates in cell wall biogenesis; peptidoglycan biosynthesis. Its function is as follows. Catalyzes the initial step of the lipid cycle reactions in the biosynthesis of the cell wall peptidoglycan: transfers peptidoglycan precursor phospho-MurNAc-pentapeptide from UDP-MurNAc-pentapeptide onto the lipid carrier undecaprenyl phosphate, yielding undecaprenyl-pyrophosphoryl-MurNAc-pentapeptide, known as lipid I. The polypeptide is Phospho-N-acetylmuramoyl-pentapeptide-transferase (Bacteroides fragilis (strain ATCC 25285 / DSM 2151 / CCUG 4856 / JCM 11019 / LMG 10263 / NCTC 9343 / Onslow / VPI 2553 / EN-2)).